A 157-amino-acid chain; its full sequence is Lipoprotein signal peptidase (157 aa).

4 consecutive transmembrane segments (helical) span residues 10-30, 36-56, 58-78, and 84-104; these read FIFIGVFLLIFGTDQAIKYAI, YESSIIDIVLVFNKGVAFSLL, FLEGSLKYLQILLILGLFIFL, and LFKAHTIEFGMVFGAGVSNIL. Catalysis depends on residues Asp114 and Asp131. Residues 123 to 143 form a helical membrane-spanning segment; that stretch reads DFAIFNFADVMIDVGVGVLLI.

The protein belongs to the peptidase A8 family.

It localises to the cell inner membrane. It catalyses the reaction Release of signal peptides from bacterial membrane prolipoproteins. Hydrolyzes -Xaa-Yaa-Zaa-|-(S,diacylglyceryl)Cys-, in which Xaa is hydrophobic (preferably Leu), and Yaa (Ala or Ser) and Zaa (Gly or Ala) have small, neutral side chains.. It participates in protein modification; lipoprotein biosynthesis (signal peptide cleavage). Its function is as follows. This protein specifically catalyzes the removal of signal peptides from prolipoproteins. The protein is Lipoprotein signal peptidase of Helicobacter acinonychis (strain Sheeba).